Consider the following 421-residue polypeptide: MEKFRVIGSDKPLVGEVTISGAKNAALPILFASILAEEPVEVANVPHLRDIDTTMELLKRLGAKVSRNGSVHVDPSSINEYCAPYDLVKTMRASIWALGPLVARFGQGQVSLPGGCAIGARPVDLHITGLEQLGATITLEDGYVKAEVDGRLKGAHIVMDKVSVGATITIMCAAALAEGTTTLDNAAREPEIVDTADFLNTLGAKISGAGTDTITIEGVERLGGGKHNVVADRIETGTFLVAAAVSGGKVVCRNTNAHLLEAVLAKLEEAGALVETGEDWISVDMTDRELKAVSIRTAPHPGFPTDMQAQFTLLNMMAKGGGVITETIFENRFMHVPELMRMGAKAEIEGNTVICGDVDSLSGAQVMATDLRASASLVIAGCIAKGETIVDRIYHIDRGYDKIENKLSALGANIERVSEAG.

A phosphoenolpyruvate-binding site is contributed by 23–24; sequence KN. Position 92 (arginine 92) interacts with UDP-N-acetyl-alpha-D-glucosamine. Cysteine 116 serves as the catalytic Proton donor. Cysteine 116 is subject to 2-(S-cysteinyl)pyruvic acid O-phosphothioketal. UDP-N-acetyl-alpha-D-glucosamine-binding positions include 121 to 125, 161 to 164, aspartate 306, and isoleucine 328; these read RPVDL and KVSV.

The protein belongs to the EPSP synthase family. MurA subfamily.

The protein resides in the cytoplasm. It carries out the reaction phosphoenolpyruvate + UDP-N-acetyl-alpha-D-glucosamine = UDP-N-acetyl-3-O-(1-carboxyvinyl)-alpha-D-glucosamine + phosphate. It participates in cell wall biogenesis; peptidoglycan biosynthesis. Functionally, cell wall formation. Adds enolpyruvyl to UDP-N-acetylglucosamine. This chain is UDP-N-acetylglucosamine 1-carboxyvinyltransferase, found in Vibrio campbellii (strain ATCC BAA-1116).